The following is a 345-amino-acid chain: Ferredoxin--NADP reductase (345 aa).

FAD is bound by residues Asp38, Gln46, Tyr51, Val91, Phe129, Asp295, and Thr336.

This sequence belongs to the ferredoxin--NADP reductase type 2 family. In terms of assembly, homodimer. Requires FAD as cofactor.

It carries out the reaction 2 reduced [2Fe-2S]-[ferredoxin] + NADP(+) + H(+) = 2 oxidized [2Fe-2S]-[ferredoxin] + NADPH. The sequence is that of Ferredoxin--NADP reductase from Rhodospirillum rubrum (strain ATCC 11170 / ATH 1.1.1 / DSM 467 / LMG 4362 / NCIMB 8255 / S1).